The chain runs to 164 residues: Protein SprT (164 aa).

A SprT-like domain is found at 14–156 (QLAESFFKRP…LCRRCRNTLV (143 aa)). H69 is a binding site for Zn(2+). The active site involves E70. H73 is a binding site for Zn(2+).

This sequence belongs to the SprT family. Requires Zn(2+) as cofactor.

It is found in the cytoplasm. In Pseudomonas fluorescens (strain Pf0-1), this protein is Protein SprT.